A 557-amino-acid chain; its full sequence is Organic cation/carnitine transporter 2 (557 aa).

Residues 1-20 are Cytoplasmic-facing; sequence MRDYDEVTAFLGEWGPFQRL. The helical transmembrane segment at 21 to 41 threads the bilayer; it reads IFFLLSASIIPNGFNGMSIVF. At 42–142 the chain is on the extracellular side; that stretch reads LAGTPEHRCL…DLVCKDDWKA (101 aa). Asparagine 57, asparagine 64, and asparagine 91 each carry an N-linked (GlcNAc...) asparagine glycan. The chain crosses the membrane as a helical span at residues 143-163; it reads PLTTSLFFVGVLMGSFISGQL. Residues 164–172 are Cytoplasmic-facing; the sequence is SDRFGRKNV. Residues 173–193 form a helical membrane-spanning segment; the sequence is LFLTMGMQTGFSFLQVFSVNF. At 194–197 the chain is on the extracellular side; the sequence is EMFT. The helical transmembrane segment at 198 to 218 threads the bilayer; it reads VLFVLVGMGQISNYVAAFVLG. ATP is bound at residue 218-225; that stretch reads GTEILSKS. The Cytoplasmic portion of the chain corresponds to 219-232; it reads TEILSKSIRIIFAT. Residues 233–253 form a helical membrane-spanning segment; sequence LGVCIFYAFGFMVLPLFAYFI. Over 254 to 257 the chain is Extracellular; the sequence is RDWR. Residues 258–278 form a helical membrane-spanning segment; sequence MLLLALTVPGVLCGALWWFIP. The Cytoplasmic portion of the chain corresponds to 279-341; the sequence is ESPRWLISQG…YDLIRTRNIR (63 aa). The helical transmembrane segment at 342–362 threads the bilayer; the sequence is VITIMSIILWLTISVGYFGLS. Over 363 to 373 the chain is Extracellular; sequence LDTPNLHGDIY. The helical transmembrane segment at 374 to 394 threads the bilayer; it reads VNCFLLAAVEVPAYVLAWLLL. The Cytoplasmic portion of the chain corresponds to 395–406; that stretch reads QYLPRRYSISAA. Residues 407–427 form a helical membrane-spanning segment; it reads LFLGGSVLLFMQLVPSELFYL. Residues 428-430 are Extracellular-facing; it reads STA. Residues 431 to 451 traverse the membrane as a helical segment; the sequence is LVMVGKFGITSAYSMVYVYTA. At 452–462 the chain is on the cytoplasmic side; that stretch reads ELYPTVVRNMG. The chain crosses the membrane as a helical span at residues 463-483; the sequence is VGVSSTASRLGSILSPYFVYL. The Extracellular portion of the chain corresponds to 484–488; the sequence is GAYDR. Phosphotyrosine is present on tyrosine 486. A helical membrane pass occupies residues 489–509; the sequence is FLPYILMGSLTILTAILTLFF. Residues 510-557 are Cytoplasmic-facing; sequence PESFGVPLPDTIDQMLRVKGIKQWQIQSQTRMQKDGEESPTVLKSTAF. Phosphoserine is present on serine 548. Threonine 550 is modified (phosphothreonine).

This sequence belongs to the major facilitator (TC 2.A.1) superfamily. Organic cation transporter (TC 2.A.1.19) family. As to quaternary structure, interacts with PDZK1. Widely expressed. Expressed in kidney, liver and testis. Expressed at the brush border of the small, large intestine and colon (at protein level).

It is found in the apical cell membrane. The protein resides in the basal cell membrane. The protein localises to the cell membrane. The enzyme catalyses (R)-carnitine(out) + Na(+)(out) = (R)-carnitine(in) + Na(+)(in). The catalysed reaction is glycine betaine(out) + Na(+)(out) = glycine betaine(in) + Na(+)(in). It carries out the reaction glycine betaine(out) + (R)-carnitine(in) = glycine betaine(in) + (R)-carnitine(out). It catalyses the reaction O-butanoyl-(R)-carnitine(out) + Na(+)(out) = O-butanoyl-(R)-carnitine(in) + Na(+)(in). The enzyme catalyses O-acetyl-(R)-carnitine(out) + Na(+)(out) = O-acetyl-(R)-carnitine(in) + Na(+)(in). The catalysed reaction is O-propanoyl-(R)-carnitine(out) + Na(+)(out) = O-propanoyl-(R)-carnitine(in) + Na(+)(in). It carries out the reaction (S)-carnitine(out) + Na(+)(out) = (S)-carnitine(in) + Na(+)(in). It catalyses the reaction an O-acyl-(R)-carnitine(out) + Na(+)(out) = an O-acyl-(R)-carnitine(in) + Na(+)(in). The enzyme catalyses L-glutamyl-L-arginyl-glycyl-L-methionyl-L-threonine(out) + Na(+)(out) = L-glutamyl-L-arginyl-glycyl-L-methionyl-L-threonine(in) + Na(+)(in). The catalysed reaction is N,N-dimethylglycine(out) + Na(+)(out) = N,N-dimethylglycine(in) + Na(+)(in). Its activity is regulated as follows. Inhibited by emetine, quinidine and verapamil. The IC(50) of emetine is 4.2 uM. Not inhibited by valproic acid. Transport of (R)-carnitine is stimulated by cholesterol in the plasma membrane. In terms of biological role, sodium-ion dependent, high affinity carnitine transporter. Involved in the active cellular uptake of carnitine. Transports one sodium ion with one molecule of carnitine. Also transports organic cations such as tetraethylammonium (TEA) without the involvement of sodium. Also relative uptake activity ratio of carnitine to TEA is 11.3. May also contribute to regulate the transport of organic compounds in testis across the blood-testis-barrier. The protein is Organic cation/carnitine transporter 2 of Mus musculus (Mouse).